A 247-amino-acid chain; its full sequence is Probable transcriptional regulatory protein Asuc_1803 (247 aa).

It belongs to the TACO1 family.

It localises to the cytoplasm. In Actinobacillus succinogenes (strain ATCC 55618 / DSM 22257 / CCUG 43843 / 130Z), this protein is Probable transcriptional regulatory protein Asuc_1803.